A 374-amino-acid polypeptide reads, in one-letter code: UDP-N-acetylglucosamine--N-acetylmuramyl-(pentapeptide) pyrophosphoryl-undecaprenol N-acetylglucosamine transferase (374 aa).

Residues Thr13–Gly15, Asn124, Arg165, Ser193, and Gln294 each bind UDP-N-acetyl-alpha-D-glucosamine.

This sequence belongs to the glycosyltransferase 28 family. MurG subfamily.

The protein resides in the cell inner membrane. The catalysed reaction is di-trans,octa-cis-undecaprenyl diphospho-N-acetyl-alpha-D-muramoyl-L-alanyl-D-glutamyl-meso-2,6-diaminopimeloyl-D-alanyl-D-alanine + UDP-N-acetyl-alpha-D-glucosamine = di-trans,octa-cis-undecaprenyl diphospho-[N-acetyl-alpha-D-glucosaminyl-(1-&gt;4)]-N-acetyl-alpha-D-muramoyl-L-alanyl-D-glutamyl-meso-2,6-diaminopimeloyl-D-alanyl-D-alanine + UDP + H(+). It participates in cell wall biogenesis; peptidoglycan biosynthesis. Cell wall formation. Catalyzes the transfer of a GlcNAc subunit on undecaprenyl-pyrophosphoryl-MurNAc-pentapeptide (lipid intermediate I) to form undecaprenyl-pyrophosphoryl-MurNAc-(pentapeptide)GlcNAc (lipid intermediate II). This chain is UDP-N-acetylglucosamine--N-acetylmuramyl-(pentapeptide) pyrophosphoryl-undecaprenol N-acetylglucosamine transferase, found in Rhizobium johnstonii (strain DSM 114642 / LMG 32736 / 3841) (Rhizobium leguminosarum bv. viciae).